A 297-amino-acid chain; its full sequence is uncharacterized protein (297 aa).

The HTH lysR-type domain maps to 1-60 (MNIELRHLRYFVAVAEELHFGRAAARLNISQPPLSQQIQALEQQIGARLLARTNRSVLLT). A DNA-binding region (H-T-H motif) is located at residues 20–40 (FGRAAARLNISQPPLSQQIQA).

The protein belongs to the LysR transcriptional regulatory family.

This is an uncharacterized protein from Escherichia coli (strain K12).